A 633-amino-acid chain; its full sequence is Polypeptide N-acetylgalactosaminyltransferase 3 (633 aa).

Residues 1 to 19 (MAHLKRLVKLHIKRHYHRK) are Cytoplasmic-facing. The helical; Signal-anchor for type II membrane protein transmembrane segment at 20–37 (FWKLGAVIFFFLVVLILM) threads the bilayer. Residues 38–633 (QREVSVQYSK…LQKWIFSQND (596 aa)) lie on the Lumenal side of the membrane. Residues 112 to 145 (DRPPQDSNAPGASGKPFKITHLSPEEQKEKERGE) are disordered. Residues 134 to 145 (SPEEQKEKERGE) show a composition bias toward basic and acidic residues. The catalytic subdomain A stretch occupies residues 184–293 (LPTTSVIIVF…YGWLEPLLAR (110 aa)). Positions 277 and 279 each coordinate Mn(2+). N-linked (GlcNAc...) asparagine glycosylation occurs at Asn-297. The segment at 356 to 418 (PIKTPTFAGG…PCSVVGHVFR (63 aa)) is catalytic subdomain B. A Mn(2+)-binding site is contributed by His-415. An N-linked (GlcNAc...) asparagine glycan is attached at Asn-484. The region spanning 504–630 (VISGYIKSVG…TDLLQKWIFS (127 aa)) is the Ricin B-type lectin domain. Cys-517 and Cys-535 form a disulfide bridge. Positions 519, 522, 536, and 541 each coordinate UDP-N-acetyl-alpha-D-galactosamine. 2 cysteine pairs are disulfide-bonded: Cys-561-Cys-574 and Cys-605-Cys-618.

It belongs to the glycosyltransferase 2 family. GalNAc-T subfamily. It depends on Mn(2+) as a cofactor. In terms of tissue distribution, highly expressed in the reproductive tract, principally in the testis and uterus, and to a lesser degree in the cervix with only trace levels in the ovary. Also expressed at high level in sublingual gland, stomach and colon, with more moderate amounts present in the submandibular and parotid gland as well as the kidney.

The protein localises to the golgi apparatus. The protein resides in the golgi stack membrane. The catalysed reaction is L-seryl-[protein] + UDP-N-acetyl-alpha-D-galactosamine = a 3-O-[N-acetyl-alpha-D-galactosaminyl]-L-seryl-[protein] + UDP + H(+). The enzyme catalyses L-threonyl-[protein] + UDP-N-acetyl-alpha-D-galactosamine = a 3-O-[N-acetyl-alpha-D-galactosaminyl]-L-threonyl-[protein] + UDP + H(+). The protein operates within protein modification; protein glycosylation. Its function is as follows. Catalyzes the initial reaction in O-linked oligosaccharide biosynthesis, the transfer of an N-acetyl-D-galactosamine residue to a serine or threonine residue on the protein receptor. Has activity toward HIV envelope glycoprotein gp120. Has activity towards EA2, MUC2 and MUC5. Probably glycosylates fibronectin in vivo. Glycosylates FGF23. This Mus musculus (Mouse) protein is Polypeptide N-acetylgalactosaminyltransferase 3 (Galnt3).